The sequence spans 354 residues: Probable trehalose-phosphate phosphatase E (354 aa).

It belongs to the trehalose phosphatase family. It depends on a divalent metal cation as a cofactor.

It carries out the reaction alpha,alpha-trehalose 6-phosphate + H2O = alpha,alpha-trehalose + phosphate. It participates in glycan biosynthesis; trehalose biosynthesis. Removes the phosphate from trehalose 6-phosphate to produce free trehalose. Trehalose accumulation in plant may improve abiotic stress tolerance. The sequence is that of Probable trehalose-phosphate phosphatase E (TPPE) from Arabidopsis thaliana (Mouse-ear cress).